The following is a 518-amino-acid chain: Protein nucleotidyltransferase YdiU (518 aa).

Residues 1–22 form a disordered region; the sequence is MTHLQFDNRLRAELPGDPEEGP. Gly-100, Gly-102, Arg-103, Lys-123, Asp-135, Gly-136, Arg-193, and Arg-200 together coordinate ATP. The active-site Proton acceptor is Asp-270. Mg(2+) contacts are provided by Asn-271 and Asp-280. Residue Asp-280 participates in ATP binding.

It belongs to the SELO family. Mg(2+) serves as cofactor. The cofactor is Mn(2+).

The enzyme catalyses L-seryl-[protein] + ATP = 3-O-(5'-adenylyl)-L-seryl-[protein] + diphosphate. It catalyses the reaction L-threonyl-[protein] + ATP = 3-O-(5'-adenylyl)-L-threonyl-[protein] + diphosphate. It carries out the reaction L-tyrosyl-[protein] + ATP = O-(5'-adenylyl)-L-tyrosyl-[protein] + diphosphate. The catalysed reaction is L-histidyl-[protein] + UTP = N(tele)-(5'-uridylyl)-L-histidyl-[protein] + diphosphate. The enzyme catalyses L-seryl-[protein] + UTP = O-(5'-uridylyl)-L-seryl-[protein] + diphosphate. It catalyses the reaction L-tyrosyl-[protein] + UTP = O-(5'-uridylyl)-L-tyrosyl-[protein] + diphosphate. Its function is as follows. Nucleotidyltransferase involved in the post-translational modification of proteins. It can catalyze the addition of adenosine monophosphate (AMP) or uridine monophosphate (UMP) to a protein, resulting in modifications known as AMPylation and UMPylation. This is Protein nucleotidyltransferase YdiU from Xanthomonas campestris pv. campestris (strain 8004).